Here is a 528-residue protein sequence, read N- to C-terminus: Protein DA1-related 2 (528 aa).

The interval 60–108 (SNGGGSGAHTNHHPPQFQEDENMVFPLPPSSLDDRSRGARDKEELDRSI) is disordered. The span at 91–106 (LDDRSRGARDKEELDR) shows a compositional bias: basic and acidic residues. The UIM 1 domain maps to 99–118 (RDKEELDRSISLSLADNTKR). Positions 127 to 148 (DNNRDFPRPFHGGLNPSSFIPP) constitute a UIM 2; degenerate domain. Residues 160 to 220 (RICGGCNSDI…KLCFKELTHP (61 aa)) enclose the LIM zinc-binding domain. Positions 447–474 (DPSTRNLPSTSSVATSSSSSFSNKKGGK) are disordered. Over residues 455–470 (STSSVATSSSSSFSNK) the composition is skewed to low complexity.

In terms of assembly, interacts with ubiquitin, TCP14 and TCP15. Post-translationally, polyubiquitinated by DA2. In terms of tissue distribution, expressed in the vasculature of leaves, inflorescence stems, flowers, hypocotyls, and primary and lateral roots. In roots, expressed in phloem companion cells.

Functionally, acts redundantly with DA1 and DAR1 to regulate endoreduplication during leaf development. Together with DA1 and DAR1, modulates the protein stability of the transcription factors TCP14 and TCP15, which repress endoreduplication by directly regulating the expression of cell-cycle genes. Involved in root phloem development. Is an essential component of early phloem development, long-distance delivery of phloem content, and proper maintenance of root system architecture. Involved in the control of root meristem size. Functions genetically downstream of cytokinin and IAA3 to maintain normal auxin distribution by influencing polar auxin transport. Acts through the PLETHORA pathway, upstream of PLT1 and PLT2 to influence root stem cell niche activity and thus control root meristem size. This is Protein DA1-related 2 from Arabidopsis thaliana (Mouse-ear cress).